An 88-amino-acid chain; its full sequence is Translation initiation factor IF-1 2 (88 aa).

The 72-residue stretch at 1-72 (MAKEELIEMQ…TKGRITFRHL (72 aa)) folds into the S1-like domain.

The protein belongs to the IF-1 family. Component of the 30S ribosomal translation pre-initiation complex which assembles on the 30S ribosome in the order IF-2 and IF-3, IF-1 and N-formylmethionyl-tRNA(fMet); mRNA recruitment can occur at any time during PIC assembly.

It localises to the cytoplasm. Functionally, one of the essential components for the initiation of protein synthesis. Stabilizes the binding of IF-2 and IF-3 on the 30S subunit to which N-formylmethionyl-tRNA(fMet) subsequently binds. Helps modulate mRNA selection, yielding the 30S pre-initiation complex (PIC). Upon addition of the 50S ribosomal subunit IF-1, IF-2 and IF-3 are released leaving the mature 70S translation initiation complex. This is Translation initiation factor IF-1 2 from Acidovorax sp. (strain JS42).